Reading from the N-terminus, the 546-residue chain is Autophagy-related protein 17 (546 aa).

The segment covering 1–22 (MSASASLSAGSDASGPGSPAGD) has biased composition (low complexity). 2 disordered regions span residues 1-26 (MSASASLSAGSDASGPGSPAGDQGNA) and 204-225 (ASSSSSSSSASNSSLPSLSSMP). Coiled-coil stretches lie at residues 312 to 341 (NVLIKDAAEAEDVVMEIQDRIGDMESILEN) and 424 to 447 (RHVRQRVEKVLRETKHKLDQLYEE). The disordered stretch occupies residues 487–527 (ILKGAPPEQPDAQDQPAAEPNEPQSGPSETTEEGEIIPHLP). Residues 496–506 (PDAQDQPAAEP) show a composition bias toward low complexity.

This sequence belongs to the ATG17 family.

Its subcellular location is the cytoplasm. The protein resides in the preautophagosomal structure membrane. Functionally, autophagy-specific protein that functions in response to autophagy-inducing signals as a scaffold to recruit other ATG proteins to organize pre-autophagosomal structure (PAS) formation. Modulates the timing and magnitude of the autophagy response, such as the size of the sequestering vesicles. Plays particularly a role in pexophagy and nucleophagy. This is Autophagy-related protein 17 (atg17) from Aspergillus niger (strain ATCC MYA-4892 / CBS 513.88 / FGSC A1513).